The following is an 80-amino-acid chain: MRTLLLTLVVVTIVCLDLGNSLICYVTRDGKTATCPPGQKCEKYAVSASHTGHWFHRWHCTSTCHEGPYNVCCSTDFCNR.

Residues 1-21 form the signal peptide; sequence MRTLLLTLVVVTIVCLDLGNS. 4 disulfides stabilise this stretch: Cys24–Cys41, Cys35–Cys60, Cys64–Cys72, and Cys73–Cys78.

Belongs to the three-finger toxin family. Short-chain subfamily. Expressed by the venom gland.

It localises to the secreted. Neurotoxin. Blocks muscular nicotinic acetylcholine receptors (nAChR). This is Three-finger toxin MALT0059C from Micrurus altirostris (Uruguayan coral snake).